The following is a 281-amino-acid chain: Probable endonuclease 4 (281 aa).

Residues His-70, His-110, Glu-146, Asp-180, His-183, His-217, Asp-230, His-232, and Glu-262 each contribute to the Zn(2+) site.

It belongs to the AP endonuclease 2 family. Requires Zn(2+) as cofactor.

It carries out the reaction Endonucleolytic cleavage to 5'-phosphooligonucleotide end-products.. Its function is as follows. Endonuclease IV plays a role in DNA repair. It cleaves phosphodiester bonds at apurinic or apyrimidinic (AP) sites, generating a 3'-hydroxyl group and a 5'-terminal sugar phosphate. This chain is Probable endonuclease 4, found in Nitratiruptor sp. (strain SB155-2).